We begin with the raw amino-acid sequence, 251 residues long: uncharacterized protein (251 aa).

Belongs to the methyltransferase superfamily.

It is found in the cytoplasm. The protein localises to the nucleus. Functionally, probable methyltransferase. This is an uncharacterized protein from Schizosaccharomyces pombe (strain 972 / ATCC 24843) (Fission yeast).